A 130-amino-acid chain; its full sequence is Large ribosomal subunit protein bL21 (130 aa).

This sequence belongs to the bacterial ribosomal protein bL21 family. In terms of assembly, part of the 50S ribosomal subunit. Contacts protein L20.

This protein binds to 23S rRNA in the presence of protein L20. In Trichormus variabilis (strain ATCC 29413 / PCC 7937) (Anabaena variabilis), this protein is Large ribosomal subunit protein bL21.